The chain runs to 244 residues: Mitochondrial import inner membrane translocase subunit Tim21 (244 aa).

A mitochondrion-targeting transit peptide spans 1-18 (MICTLLRAVRCTERLHGC). Residues 69–89 (VRSPQSAKEDGSKQVSVHRSQ) form a disordered region. A helical membrane pass occupies residues 108 to 128 (FTYLIVVLIGISITGGLFYTI).

It belongs to the TIM21 family. Component of the TIM23 complex. Component of the MITRAC (mitochondrial translation regulation assembly intermediate of cytochrome c oxidase complex) complex, the core components of this complex being COA3/MITRAC12 and COX14. Interacts with COA3 and MT-CO1/COX1.

It is found in the mitochondrion membrane. Participates in the translocation of transit peptide-containing proteins across the mitochondrial inner membrane. Also required for assembly of mitochondrial respiratory chain complex I and complex IV as component of the MITRAC (mitochondrial translation regulation assembly intermediate of cytochrome c oxidase complex) complex. Probably shuttles between the presequence translocase and respiratory-chain assembly intermediates in a process that promotes incorporation of early nuclear-encoded subunits into these complexes. This chain is Mitochondrial import inner membrane translocase subunit Tim21 (TIMM21), found in Bos taurus (Bovine).